A 373-amino-acid chain; its full sequence is Transaldolase (373 aa).

K143 functions as the Schiff-base intermediate with substrate in the catalytic mechanism.

This sequence belongs to the transaldolase family. Type 2 subfamily.

It localises to the cytoplasm. It catalyses the reaction D-sedoheptulose 7-phosphate + D-glyceraldehyde 3-phosphate = D-erythrose 4-phosphate + beta-D-fructose 6-phosphate. The protein operates within carbohydrate degradation; pentose phosphate pathway; D-glyceraldehyde 3-phosphate and beta-D-fructose 6-phosphate from D-ribose 5-phosphate and D-xylulose 5-phosphate (non-oxidative stage): step 2/3. Its function is as follows. Transaldolase is important for the balance of metabolites in the pentose-phosphate pathway. The polypeptide is Transaldolase (Mycobacterium marinum (strain ATCC BAA-535 / M)).